The sequence spans 385 residues: Chaperone protein DnaJ (385 aa).

Residues 5–70 (DYYEILEITR…SKRQIYDKYG (66 aa)) form the J domain. The CR-type zinc-finger motif lies at 136 to 213 (GCKKEIHNSF…CKGSGFEISE (78 aa)). Positions 149, 152, 165, 168, 187, 190, 201, and 204 each coordinate Zn(2+). CXXCXGXG motif repeat units follow at residues 149–156 (CSDCKGTG), 165–172 (CKDCGGKG), 187–194 (CPTCKGEG), and 201–208 (CSKCKGSG).

The protein belongs to the DnaJ family. In terms of assembly, homodimer. Zn(2+) serves as cofactor.

It is found in the cytoplasm. Its function is as follows. Participates actively in the response to hyperosmotic and heat shock by preventing the aggregation of stress-denatured proteins and by disaggregating proteins, also in an autonomous, DnaK-independent fashion. Unfolded proteins bind initially to DnaJ; upon interaction with the DnaJ-bound protein, DnaK hydrolyzes its bound ATP, resulting in the formation of a stable complex. GrpE releases ADP from DnaK; ATP binding to DnaK triggers the release of the substrate protein, thus completing the reaction cycle. Several rounds of ATP-dependent interactions between DnaJ, DnaK and GrpE are required for fully efficient folding. Also involved, together with DnaK and GrpE, in the DNA replication of plasmids through activation of initiation proteins. The sequence is that of Chaperone protein DnaJ from Helicobacter hepaticus (strain ATCC 51449 / 3B1).